Consider the following 429-residue polypeptide: Xyloglucan O-acetyltransferase 1 (429 aa).

Residues 1-20 (MGSPFKDHHHHHHPFSLAKK) lie on the Cytoplasmic side of the membrane. Residues 21–41 (LIPWTFYAMIPLVLFRLYFYP) traverse the membrane as a helical; Signal-anchor for type II membrane protein segment. Topologically, residues 42–429 (YPLHNITTPI…KWDYESRREE (388 aa)) are lumenal. N-linked (GlcNAc...) asparagine glycans are attached at residues Asn46 and Asn89. Intrachain disulfides connect Cys72–Cys122, Cys93–Cys158, Cys102–Cys402, and Cys317–Cys398. A GDS motif motif is present at residues 145 to 147 (GDS). The active-site Nucleophile is the Ser147. N-linked (GlcNAc...) asparagine glycosylation is found at Asn189, Asn263, and Asn351. The active-site Proton donor is the Asp397. A DXXH motif motif is present at residues 397-400 (DCVH). The active-site Proton acceptor is the His400.

Belongs to the PC-esterase family. TBL subfamily.

It localises to the golgi apparatus membrane. Its function is as follows. Xyloglucan acetyltransferase that catalyzes the acetylation of fucosylated Gal residues on xyloglucan side chains. Predominantly catalyze 6-O-monoacetylation of Gal residues in the Fuc-Gal-Xyl trisaccharide side chains of xyloglucan oligomers. This is Xyloglucan O-acetyltransferase 1 from Populus trichocarpa (Western balsam poplar).